We begin with the raw amino-acid sequence, 316 residues long: Pantothenate kinase (316 aa).

95 to 102 (GSVAVGKS) serves as a coordination point for ATP.

This sequence belongs to the prokaryotic pantothenate kinase family.

It is found in the cytoplasm. It catalyses the reaction (R)-pantothenate + ATP = (R)-4'-phosphopantothenate + ADP + H(+). The protein operates within cofactor biosynthesis; coenzyme A biosynthesis; CoA from (R)-pantothenate: step 1/5. The protein is Pantothenate kinase of Shewanella oneidensis (strain ATCC 700550 / JCM 31522 / CIP 106686 / LMG 19005 / NCIMB 14063 / MR-1).